A 90-amino-acid chain; its full sequence is Small ribosomal subunit protein uS17 (90 aa).

It belongs to the universal ribosomal protein uS17 family. Part of the 30S ribosomal subunit.

One of the primary rRNA binding proteins, it binds specifically to the 5'-end of 16S ribosomal RNA. The polypeptide is Small ribosomal subunit protein uS17 (Paraburkholderia phytofirmans (strain DSM 17436 / LMG 22146 / PsJN) (Burkholderia phytofirmans)).